The chain runs to 152 residues: Superoxide dismutase [Cu-Zn] (152 aa).

A lipid anchor (S-palmitoyl cysteine) is attached at Cys-7. His-47, His-49, and His-64 together coordinate Cu cation. Cys-58 and Cys-146 are disulfide-bonded. Zn(2+)-binding residues include His-64, His-72, His-81, and Asp-84. A Cu cation-binding site is contributed by His-120.

Belongs to the Cu-Zn superoxide dismutase family. Homodimer. It depends on Cu cation as a cofactor. Zn(2+) serves as cofactor.

Its subcellular location is the cytoplasm. The protein localises to the nucleus. The enzyme catalyses 2 superoxide + 2 H(+) = H2O2 + O2. Functionally, destroys radicals which are normally produced within the cells and which are toxic to biological systems. The chain is Superoxide dismutase [Cu-Zn] (sod1) from Xiphias gladius (Swordfish).